The following is a 236-amino-acid chain: Ribose-5-phosphate isomerase A (236 aa).

Substrate is bound by residues 28–31, 83–86, and 96–99; these read TGST, DGAD, and KGGG. Glu105 (proton acceptor) is an active-site residue. Lys123 serves as a coordination point for substrate.

This sequence belongs to the ribose 5-phosphate isomerase family. As to quaternary structure, homodimer.

It carries out the reaction aldehydo-D-ribose 5-phosphate = D-ribulose 5-phosphate. It participates in carbohydrate degradation; pentose phosphate pathway; D-ribose 5-phosphate from D-ribulose 5-phosphate (non-oxidative stage): step 1/1. In terms of biological role, catalyzes the reversible conversion of ribose-5-phosphate to ribulose 5-phosphate. The polypeptide is Ribose-5-phosphate isomerase A (Methylorubrum populi (strain ATCC BAA-705 / NCIMB 13946 / BJ001) (Methylobacterium populi)).